We begin with the raw amino-acid sequence, 314 residues long: Thymidylate synthase (314 aa).

Residues Arg21 and 176–177 (RR) contribute to the dUMP site. The active-site Nucleophile is Cys196. Residues 216–219 (RSAD), Asn227, and 257–259 (HLY) each bind dUMP. Asp219 provides a ligand contact to (6R)-5,10-methylene-5,6,7,8-tetrahydrofolate. Residue Ser313 coordinates (6R)-5,10-methylene-5,6,7,8-tetrahydrofolate.

The protein belongs to the thymidylate synthase family. Bacterial-type ThyA subfamily. Homodimer.

The protein resides in the cytoplasm. The enzyme catalyses dUMP + (6R)-5,10-methylene-5,6,7,8-tetrahydrofolate = 7,8-dihydrofolate + dTMP. It participates in pyrimidine metabolism; dTTP biosynthesis. Catalyzes the reductive methylation of 2'-deoxyuridine-5'-monophosphate (dUMP) to 2'-deoxythymidine-5'-monophosphate (dTMP) while utilizing 5,10-methylenetetrahydrofolate (mTHF) as the methyl donor and reductant in the reaction, yielding dihydrofolate (DHF) as a by-product. This enzymatic reaction provides an intracellular de novo source of dTMP, an essential precursor for DNA biosynthesis. In Listeria monocytogenes serovar 1/2a (strain ATCC BAA-679 / EGD-e), this protein is Thymidylate synthase.